Consider the following 306-residue polypeptide: uncharacterized protein (306 aa).

The stretch at 13–39 (NMLNEIAANNNLLNNKNNQTNQLNNNQ) forms a coiled coil. Disordered regions lie at residues 44 to 76 (YNNQNNNQNYPQNYPQNSQQNFQQNSQQNHQQN), 103 to 204 (DSKE…QSGQ), and 216 to 249 (QKQLDKNQPEKIPSKPEKNQKQSHKPKLPPTMQH). Low complexity predominate over residues 119–201 (HQQPIQNNPS…QFAQPNQYNQ (83 aa)). A compositionally biased stretch (basic and acidic residues) spans 218–235 (QLDKNQPEKIPSKPEKNQ). Residues 279–299 (LFDYIIIPIALVLVFLFLVHP) form a helical membrane-spanning segment.

Its subcellular location is the membrane. This is an uncharacterized protein from Acanthamoeba polyphaga mimivirus (APMV).